Consider the following 505-residue polypeptide: Lysine--tRNA ligase (505 aa).

Mg(2+) contacts are provided by Glu415 and Glu422.

The protein belongs to the class-II aminoacyl-tRNA synthetase family. As to quaternary structure, homodimer. It depends on Mg(2+) as a cofactor.

The protein resides in the cytoplasm. The enzyme catalyses tRNA(Lys) + L-lysine + ATP = L-lysyl-tRNA(Lys) + AMP + diphosphate. The chain is Lysine--tRNA ligase from Shigella boydii serotype 4 (strain Sb227).